The following is a 1102-amino-acid chain: Carbamoyl phosphate synthase large chain (1102 aa).

The segment at 1–408 (MPKRTDIQSV…AFQKALRSLE (408 aa)) is carboxyphosphate synthetic domain. ATP-binding residues include Arg129, Arg175, Gly181, Gly182, Glu214, Ile216, Glu221, Gly247, Val248, His249, Gln291, and Glu305. Residues 137–334 (EEVRKKIGHG…IAKIAAKLAV (198 aa)) enclose the ATP-grasp 1 domain. Residues Gln291, Glu305, and Asn307 each contribute to the Mg(2+) site. 3 residues coordinate Mn(2+): Gln291, Glu305, and Asn307. Residues 409 to 551 (KKGSQFTFVG…YFYSSYDEES (143 aa)) form an oligomerization domain region. The tract at residues 552-954 (EVAPREKPAV…AYAKSQAGAY (403 aa)) is carbamoyl phosphate synthetic domain. Residues 682–873 (GRVLAEAGLP…LAKAAARISL (192 aa)) form the ATP-grasp 2 domain. ATP-binding residues include Arg718, Arg757, Leu759, Glu764, Gly789, Ile790, His791, Ser792, Gln832, and Glu844. Mg(2+) contacts are provided by Gln832, Glu844, and Asn846. Positions 832, 844, and 846 each coordinate Mn(2+). Residues 955–1100 (GPLPTKGRAF…QEHAAFLIAA (146 aa)) enclose the MGS-like domain. The interval 955–1102 (GPLPTKGRAF…HAAFLIAARD (148 aa)) is allosteric domain.

It belongs to the CarB family. As to quaternary structure, composed of two chains; the small (or glutamine) chain promotes the hydrolysis of glutamine to ammonia, which is used by the large (or ammonia) chain to synthesize carbamoyl phosphate. Tetramer of heterodimers (alpha,beta)4. Mg(2+) is required as a cofactor. The cofactor is Mn(2+).

It catalyses the reaction hydrogencarbonate + L-glutamine + 2 ATP + H2O = carbamoyl phosphate + L-glutamate + 2 ADP + phosphate + 2 H(+). It carries out the reaction hydrogencarbonate + NH4(+) + 2 ATP = carbamoyl phosphate + 2 ADP + phosphate + 2 H(+). The protein operates within amino-acid biosynthesis; L-arginine biosynthesis; carbamoyl phosphate from bicarbonate: step 1/1. It functions in the pathway pyrimidine metabolism; UMP biosynthesis via de novo pathway; (S)-dihydroorotate from bicarbonate: step 1/3. Large subunit of the glutamine-dependent carbamoyl phosphate synthetase (CPSase). CPSase catalyzes the formation of carbamoyl phosphate from the ammonia moiety of glutamine, carbonate, and phosphate donated by ATP, constituting the first step of 2 biosynthetic pathways, one leading to arginine and/or urea and the other to pyrimidine nucleotides. The large subunit (synthetase) binds the substrates ammonia (free or transferred from glutamine from the small subunit), hydrogencarbonate and ATP and carries out an ATP-coupled ligase reaction, activating hydrogencarbonate by forming carboxy phosphate which reacts with ammonia to form carbamoyl phosphate. The chain is Carbamoyl phosphate synthase large chain from Streptomyces coelicolor (strain ATCC BAA-471 / A3(2) / M145).